A 120-amino-acid polypeptide reads, in one-letter code: MSGRAQRQHPGRLTKRAEFLAVQRGLKLRGRLFLLELLARGDDDPPRVGITVTKKVGNAVERNRIRRRLREAVRVHAADDMATGTDYVIVGRREILDAPFGALKDELSRRIRGNKPARTG.

The protein belongs to the RnpA family. Consists of a catalytic RNA component (M1 or rnpB) and a protein subunit.

The enzyme catalyses Endonucleolytic cleavage of RNA, removing 5'-extranucleotides from tRNA precursor.. In terms of biological role, RNaseP catalyzes the removal of the 5'-leader sequence from pre-tRNA to produce the mature 5'-terminus. It can also cleave other RNA substrates such as 4.5S RNA. The protein component plays an auxiliary but essential role in vivo by binding to the 5'-leader sequence and broadening the substrate specificity of the ribozyme. The sequence is that of Ribonuclease P protein component from Chelativorans sp. (strain BNC1).